A 105-amino-acid polypeptide reads, in one-letter code: Co-chaperonin GroES 3 (105 aa).

The protein belongs to the GroES chaperonin family. In terms of assembly, heptamer of 7 subunits arranged in a ring. Interacts with the chaperonin GroEL.

Its subcellular location is the cytoplasm. Functionally, together with the chaperonin GroEL, plays an essential role in assisting protein folding. The GroEL-GroES system forms a nano-cage that allows encapsulation of the non-native substrate proteins and provides a physical environment optimized to promote and accelerate protein folding. GroES binds to the apical surface of the GroEL ring, thereby capping the opening of the GroEL channel. This Rhizobium meliloti (strain 1021) (Ensifer meliloti) protein is Co-chaperonin GroES 3.